Here is a 183-residue protein sequence, read N- to C-terminus: Nascent polypeptide-associated complex subunit beta (183 aa).

The 66-residue stretch at glycine 62–valine 127 folds into the NAC-A/B domain. The disordered stretch occupies residues glutamine 150–glutamate 183. Acidic residues predominate over residues glutamate 164–glutamate 183.

It belongs to the NAC-beta family. Part of the nascent polypeptide-associated complex (NAC), consisting of egd2 and egd1. NAC associates with ribosomes via egd1.

Its subcellular location is the cytoplasm. It localises to the nucleus. In terms of biological role, component of the nascent polypeptide-associated complex (NAC), a dynamic component of the ribosomal exit tunnel, protecting the emerging polypeptides from interaction with other cytoplasmic proteins to ensure appropriate nascent protein targeting. The NAC complex also promotes mitochondrial protein import by enhancing productive ribosome interactions with the outer mitochondrial membrane and blocks the inappropriate interaction of ribosomes translating non-secretory nascent polypeptides with translocation sites in the membrane of the endoplasmic reticulum. EGD1 may act as a transcription factor that exert a negative effect on the expression of several genes that are transcribed by RNA polymerase II. This chain is Nascent polypeptide-associated complex subunit beta (egd1), found in Neosartorya fischeri (strain ATCC 1020 / DSM 3700 / CBS 544.65 / FGSC A1164 / JCM 1740 / NRRL 181 / WB 181) (Aspergillus fischerianus).